A 509-amino-acid chain; its full sequence is ATP synthase subunit alpha, mitochondrial (509 aa).

171–178 (GDRQTGKT) provides a ligand contact to ATP.

It belongs to the ATPase alpha/beta chains family. As to quaternary structure, F-type ATPases have 2 components, CF(1) - the catalytic core - and CF(0) - the membrane proton channel. CF(1) has five subunits: alpha(3), beta(3), gamma(1), delta(1), epsilon(1). CF(0) has three main subunits: a, b and c.

Its subcellular location is the mitochondrion. The protein localises to the mitochondrion inner membrane. Functionally, mitochondrial membrane ATP synthase (F(1)F(0) ATP synthase or Complex V) produces ATP from ADP in the presence of a proton gradient across the membrane which is generated by electron transport complexes of the respiratory chain. F-type ATPases consist of two structural domains, F(1) - containing the extramembraneous catalytic core, and F(0) - containing the membrane proton channel, linked together by a central stalk and a peripheral stalk. During catalysis, ATP synthesis in the catalytic domain of F(1) is coupled via a rotary mechanism of the central stalk subunits to proton translocation. Subunits alpha and beta form the catalytic core in F(1). Rotation of the central stalk against the surrounding alpha(3)beta(3) subunits leads to hydrolysis of ATP in three separate catalytic sites on the beta subunits. Subunit alpha does not bear the catalytic high-affinity ATP-binding sites. This chain is ATP synthase subunit alpha, mitochondrial (ATPA), found in Oryza sativa subsp. indica (Rice).